Reading from the N-terminus, the 303-residue chain is Probable cat1 operon transcriptional activator (303 aa).

Positions 1–58 (MDLRQFRYFVAVARERNFTRAARQLNIAQPPLSRQIQLLEEEVGVPLLIRNSRPVQLT) constitute an HTH lysR-type domain. Positions 18 to 37 (FTRAARQLNIAQPPLSRQIQ) form a DNA-binding region, H-T-H motif.

It belongs to the LysR transcriptional regulatory family.

Its function is as follows. Probable positive regulator of the cat1 operon which encode enzymes responsible for the degradation of catechol to acetyl-CoA via the beta-ketoadipate pathway. The sequence is that of Probable cat1 operon transcriptional activator from Acinetobacter lwoffii.